Consider the following 405-residue polypeptide: Argininosuccinate synthase (405 aa).

ATP-binding positions include 10–18 (AYSGGLDTS) and Ala-37. L-citrulline is bound by residues Tyr-88 and Ser-93. Gly-118 contacts ATP. The L-aspartate site is built by Thr-120, Asn-124, and Asp-125. Residue Asn-124 participates in L-citrulline binding. L-citrulline contacts are provided by Arg-128, Ser-179, Ser-188, Glu-264, and Tyr-276.

Belongs to the argininosuccinate synthase family. Type 1 subfamily. Homotetramer.

It is found in the cytoplasm. The enzyme catalyses L-citrulline + L-aspartate + ATP = 2-(N(omega)-L-arginino)succinate + AMP + diphosphate + H(+). It functions in the pathway amino-acid biosynthesis; L-arginine biosynthesis; L-arginine from L-ornithine and carbamoyl phosphate: step 2/3. This is Argininosuccinate synthase from Stutzerimonas stutzeri (strain A1501) (Pseudomonas stutzeri).